We begin with the raw amino-acid sequence, 400 residues long: Lysophospholipid transporter LplT (400 aa).

Helical transmembrane passes span 19 to 39, 53 to 73, 91 to 111, 139 to 159, 164 to 184, 195 to 213, 227 to 247, 257 to 277, 281 to 301, 304 to 324, 352 to 372, and 373 to 393; these read VIVA…ATLA, VLQM…GQIA, AGAA…LVGI, LMEA…GVLA, IAAL…NLFI, SWRL…VVLW, LFWG…PVAL, YLNA…AKLV, TVSR…IFSL, ALLP…FFVV, NSAM…GVPA, and VAIG…LWIW.

The protein belongs to the major facilitator superfamily. LplT (TC 2.A.1.42) family.

It localises to the cell inner membrane. Functionally, catalyzes the facilitated diffusion of 2-acyl-glycero-3-phosphoethanolamine (2-acyl-GPE) into the cell. The polypeptide is Lysophospholipid transporter LplT (Salmonella typhi).